A 352-amino-acid chain; its full sequence is Probable dual-specificity RNA methyltransferase RlmN (352 aa).

Glutamate 93 functions as the Proton acceptor in the catalytic mechanism. The region spanning 99 to 332 (TAKRLTVCVS…ATVRQTRGLD (234 aa)) is the Radical SAM core domain. A disulfide bridge links cysteine 106 with cysteine 337. Residues cysteine 113, cysteine 117, and cysteine 120 each contribute to the [4Fe-4S] cluster site. Residues 160–161 (GE), serine 190, 213–215 (SLH), and asparagine 294 contribute to the S-adenosyl-L-methionine site. Cysteine 337 serves as the catalytic S-methylcysteine intermediate.

The protein belongs to the radical SAM superfamily. RlmN family. [4Fe-4S] cluster serves as cofactor.

It is found in the cytoplasm. The catalysed reaction is adenosine(2503) in 23S rRNA + 2 reduced [2Fe-2S]-[ferredoxin] + 2 S-adenosyl-L-methionine = 2-methyladenosine(2503) in 23S rRNA + 5'-deoxyadenosine + L-methionine + 2 oxidized [2Fe-2S]-[ferredoxin] + S-adenosyl-L-homocysteine. The enzyme catalyses adenosine(37) in tRNA + 2 reduced [2Fe-2S]-[ferredoxin] + 2 S-adenosyl-L-methionine = 2-methyladenosine(37) in tRNA + 5'-deoxyadenosine + L-methionine + 2 oxidized [2Fe-2S]-[ferredoxin] + S-adenosyl-L-homocysteine. Functionally, specifically methylates position 2 of adenine 2503 in 23S rRNA and position 2 of adenine 37 in tRNAs. The sequence is that of Probable dual-specificity RNA methyltransferase RlmN from Synechococcus sp. (strain JA-2-3B'a(2-13)) (Cyanobacteria bacterium Yellowstone B-Prime).